The primary structure comprises 228 residues: Small ribosomal subunit protein uS7m (228 aa).

A mitochondrion-targeting transit peptide spans 1-33 (MAASVRHLLKPWTPSLCLMRWSRYNPYYLDPEP).

Belongs to the universal ribosomal protein uS7 family. As to quaternary structure, component of the mitochondrial ribosome small subunit (28S) which comprises a 12S rRNA and about 30 distinct proteins.

Its subcellular location is the mitochondrion. The protein is Small ribosomal subunit protein uS7m (mrps7) of Danio rerio (Zebrafish).